We begin with the raw amino-acid sequence, 230 residues long: Cytidylate kinase (230 aa).

12–20 (GPSGAGKGT) serves as a coordination point for ATP.

This sequence belongs to the cytidylate kinase family. Type 1 subfamily.

The protein localises to the cytoplasm. It catalyses the reaction CMP + ATP = CDP + ADP. The enzyme catalyses dCMP + ATP = dCDP + ADP. In Shewanella pealeana (strain ATCC 700345 / ANG-SQ1), this protein is Cytidylate kinase.